The following is a 308-amino-acid chain: Staphylococcal superantigen-like 4 (308 aa).

Residues 1 to 30 (MKITTIAKTSLALGLLTTGVITTTTQAANA) form the signal peptide. The interval 32–117 (TLSSTKVEAP…TTKQVPTEIN (86 aa)) is disordered. Composition is skewed to polar residues over residues 33 to 47 (LSSTKVEAPQSTPPS) and 55 to 76 (SKPNATTPPSTKVEAPQQTANA). Residues 77–93 (TTPPSTKVTTPPSTNTP) show a composition bias toward low complexity. The segment covering 94–114 (QPMQSTKSDTPQSPTTKQVPT) has biased composition (polar residues). The interval 180–278 (VDVFVVLEEN…VIKMKNGGKY (99 aa)) is sialyl Lewis X-binding.

The protein belongs to the staphylococcal/streptococcal toxin family.

It is found in the secreted. Secreted protein that plays a role in immune innate response inhibition by interfering with host TLR2-mediated pathway. In Staphylococcus aureus (strain NCTC 8325 / PS 47), this protein is Staphylococcal superantigen-like 4.